Reading from the N-terminus, the 398-residue chain is Glycosyltransferase GlyF (398 aa).

Positions 1–259 (MRKSIVLAAD…SEIAFQRSDL (259 aa)) are GT8 domain. Residues 8-13 (AADNAY) and 101-102 (DS) each bind UDP. Positions 101, 103, and 221 each coordinate Mn(2+). 221–227 (HYASHDK) provides a ligand contact to UDP.

This sequence in the N-terminal section; belongs to the glycosyltransferase 8 family.

Its function is as follows. May be involved in the polymorphic O-glycosylation of the serine-rich repeat protein PsrP. Has hydrolytic activity against UDP-galactose and to a lesser extent against UDP-glucose; no glycosyltransferase activity has been seen with tested substrates. This is Glycosyltransferase GlyF from Streptococcus pneumoniae serotype 4 (strain ATCC BAA-334 / TIGR4).